The following is a 427-amino-acid chain: tRNA(Ile)-lysidine synthase (427 aa).

29–34 (SGGVDS) provides a ligand contact to ATP.

The protein belongs to the tRNA(Ile)-lysidine synthase family.

It is found in the cytoplasm. The catalysed reaction is cytidine(34) in tRNA(Ile2) + L-lysine + ATP = lysidine(34) in tRNA(Ile2) + AMP + diphosphate + H(+). Ligates lysine onto the cytidine present at position 34 of the AUA codon-specific tRNA(Ile) that contains the anticodon CAU, in an ATP-dependent manner. Cytidine is converted to lysidine, thus changing the amino acid specificity of the tRNA from methionine to isoleucine. The polypeptide is tRNA(Ile)-lysidine synthase (Thermosipho africanus (strain TCF52B)).